A 639-amino-acid polypeptide reads, in one-letter code: Chaperone protein DnaK (639 aa).

A Phosphothreonine; by autocatalysis modification is found at Thr-198. Positions 597 to 639 (AYSAGQSAEGAPHAAGAEASAQSRTDDGVVDADFEEVDEKKGH) are disordered. Over residues 603 to 617 (SAEGAPHAAGAEASA) the composition is skewed to low complexity. A compositionally biased stretch (acidic residues) spans 624–633 (GVVDADFEEV).

The protein belongs to the heat shock protein 70 family.

Acts as a chaperone. The polypeptide is Chaperone protein DnaK (Rhodospirillum rubrum (strain ATCC 11170 / ATH 1.1.1 / DSM 467 / LMG 4362 / NCIMB 8255 / S1)).